A 379-amino-acid chain; its full sequence is Homoserine O-acetyltransferase (379 aa).

The AB hydrolase-1 domain maps to 52-356; it reads NVVMVLHALT…IRGHDGFLVE (305 aa). Ser157 acts as the Nucleophile in catalysis. Arg227 contributes to the substrate binding site. Active-site residues include Asp320 and His350. Position 351 (Asp351) interacts with substrate.

It belongs to the AB hydrolase superfamily. MetX family. In terms of assembly, homodimer.

It localises to the cytoplasm. It carries out the reaction L-homoserine + acetyl-CoA = O-acetyl-L-homoserine + CoA. Its pathway is amino-acid biosynthesis; L-methionine biosynthesis via de novo pathway; O-acetyl-L-homoserine from L-homoserine: step 1/1. Transfers an acetyl group from acetyl-CoA to L-homoserine, forming acetyl-L-homoserine. This chain is Homoserine O-acetyltransferase, found in Mycobacterium marinum (strain ATCC BAA-535 / M).